The chain runs to 234 residues: Sperm-associated microtubule inner protein 5 (234 aa).

As to quaternary structure, microtubule inner protein component of sperm flagellar doublet microtubules. In terms of tissue distribution, expressed in testis (at protein level). Strongly expressed in peritubular cells and Leydig cells and weakly expressed in the cytoplasm of spermatocytes.

Its subcellular location is the cytoplasm. It localises to the cytoskeleton. The protein resides in the flagellum axoneme. It is found in the nucleus. Functionally, microtubule inner protein (MIP) part of the dynein-decorated doublet microtubules (DMTs) in flagellum axoneme. May serve to reinforce and thus stabilize the microtubule structure in the sperm flagella. The sequence is that of Sperm-associated microtubule inner protein 5 from Homo sapiens (Human).